A 215-amino-acid polypeptide reads, in one-letter code: tRNA (guanine-N(7)-)-methyltransferase (215 aa).

Residues Glu43, Glu68, Asp95, and Asp117 each coordinate S-adenosyl-L-methionine. Asp117 is a catalytic residue. Substrate-binding positions include Lys121, Asp153, and 190–193 (TEYE).

The protein belongs to the class I-like SAM-binding methyltransferase superfamily. TrmB family.

It catalyses the reaction guanosine(46) in tRNA + S-adenosyl-L-methionine = N(7)-methylguanosine(46) in tRNA + S-adenosyl-L-homocysteine. It functions in the pathway tRNA modification; N(7)-methylguanine-tRNA biosynthesis. Catalyzes the formation of N(7)-methylguanine at position 46 (m7G46) in tRNA. This is tRNA (guanine-N(7)-)-methyltransferase from Staphylococcus epidermidis (strain ATCC 35984 / DSM 28319 / BCRC 17069 / CCUG 31568 / BM 3577 / RP62A).